The primary structure comprises 255 residues: Indole-3-glycerol phosphate synthase (255 aa).

Belongs to the TrpC family.

The enzyme catalyses 1-(2-carboxyphenylamino)-1-deoxy-D-ribulose 5-phosphate + H(+) = (1S,2R)-1-C-(indol-3-yl)glycerol 3-phosphate + CO2 + H2O. It participates in amino-acid biosynthesis; L-tryptophan biosynthesis; L-tryptophan from chorismate: step 4/5. This Streptococcus pneumoniae (strain Hungary19A-6) protein is Indole-3-glycerol phosphate synthase.